The sequence spans 376 residues: Chaperone protein DnaJ (376 aa).

A J domain is found at 5 to 70 (DYYEVLGVGR…DKKAAYDQFG (66 aa)). The CR-type zinc finger occupies 132–210 (GLTKELRIPT…CHGDGRVEKS (79 aa)). The Zn(2+) site is built by cysteine 145, cysteine 148, cysteine 162, cysteine 165, cysteine 184, cysteine 187, cysteine 198, and cysteine 201. CXXCXGXG motif repeat units follow at residues 145–152 (CDLCDGSG), 162–169 (CTTCHGQG), 184–191 (CPTCHGRG), and 198–205 (CTKCHGDG).

This sequence belongs to the DnaJ family. In terms of assembly, homodimer. Zn(2+) is required as a cofactor.

It is found in the cytoplasm. Functionally, participates actively in the response to hyperosmotic and heat shock by preventing the aggregation of stress-denatured proteins and by disaggregating proteins, also in an autonomous, DnaK-independent fashion. Unfolded proteins bind initially to DnaJ; upon interaction with the DnaJ-bound protein, DnaK hydrolyzes its bound ATP, resulting in the formation of a stable complex. GrpE releases ADP from DnaK; ATP binding to DnaK triggers the release of the substrate protein, thus completing the reaction cycle. Several rounds of ATP-dependent interactions between DnaJ, DnaK and GrpE are required for fully efficient folding. Also involved, together with DnaK and GrpE, in the DNA replication of plasmids through activation of initiation proteins. In Shewanella putrefaciens (strain CN-32 / ATCC BAA-453), this protein is Chaperone protein DnaJ.